The primary structure comprises 425 residues: Kynurenine/alpha-aminoadipate aminotransferase, mitochondrial (425 aa).

Residues 1–29 (MNYSRFLTATSLARKPSPIRTTADILSKA) constitute a mitochondrion transit peptide. R20 lines the substrate pocket. S40 is modified (phosphoserine). K69 carries the N6-acetyllysine modification. Y74 serves as a coordination point for substrate. K172 carries the post-translational modification N6-succinyllysine. N6-acetyllysine is present on K179. Substrate is bound at residue N202. Position 263 is an N6-(pyridoxal phosphate)lysine; alternate (K263). 2 positions are modified to N6-acetyllysine; alternate: K263 and K339. N6-succinyllysine; alternate is present on residues K263 and K339. K351 carries the post-translational modification N6-acetyllysine. K367 carries the post-translational modification N6-acetyllysine; alternate. The residue at position 367 (K367) is an N6-succinyllysine; alternate. A substrate-binding site is contributed by R399. At K422 the chain carries N6-acetyllysine.

Belongs to the class-I pyridoxal-phosphate-dependent aminotransferase family. Homodimer. Pyridoxal 5'-phosphate is required as a cofactor. In terms of tissue distribution, expressed mainly in kidney and to a lesser amount in liver and brain.

Its subcellular location is the mitochondrion. It catalyses the reaction L-kynurenine + 2-oxoglutarate = kynurenate + L-glutamate + H2O. The enzyme catalyses L-2-aminoadipate + 2-oxoglutarate = 2-oxoadipate + L-glutamate. It carries out the reaction glycine + 2-oxoglutarate = glyoxylate + L-glutamate. The catalysed reaction is L-kynurenine + glyoxylate = kynurenate + glycine + H2O. It catalyses the reaction 3-hydroxy-L-kynurenine + glyoxylate = xanthurenate + glycine + H2O. The enzyme catalyses 2-oxohexanoate + L-kynurenine = L-2-aminohexanoate + kynurenate + H2O. It carries out the reaction 3-phenylpyruvate + L-kynurenine = kynurenate + L-phenylalanine + H2O. The catalysed reaction is 4-methylsulfanyl-2-oxobutanoate + L-kynurenine = kynurenate + L-methionine + H2O. It catalyses the reaction 2-oxo-3-sulfanylpropanoate + L-kynurenine = kynurenate + L-cysteine + H2O. The enzyme catalyses indole-3-pyruvate + L-kynurenine = kynurenate + L-tryptophan + H2O. It carries out the reaction 2-oxopentanoate + L-kynurenine = L-2-aminopentanoate + kynurenate + H2O. The catalysed reaction is 4-methyl-2-oxopentanoate + L-kynurenine = kynurenate + L-leucine + H2O. It catalyses the reaction glyoxylate + L-methionine = 4-methylsulfanyl-2-oxobutanoate + glycine. The enzyme catalyses L-2-aminoadipate + glyoxylate = 2-oxoadipate + glycine. It carries out the reaction L-tyrosine + glyoxylate = 3-(4-hydroxyphenyl)pyruvate + glycine. The catalysed reaction is glyoxylate + L-phenylalanine = 3-phenylpyruvate + glycine. It catalyses the reaction L-tryptophan + glyoxylate = indole-3-pyruvate + glycine. The enzyme catalyses L-leucine + glyoxylate = 4-methyl-2-oxopentanoate + glycine. It carries out the reaction 2-oxobutanoate + L-kynurenine = (2S)-2-aminobutanoate + kynurenate + H2O. The catalysed reaction is 2-oxoadipate + L-kynurenine = L-2-aminoadipate + kynurenate + H2O. Its pathway is amino-acid degradation; L-lysine degradation via saccharopine pathway; glutaryl-CoA from L-lysine: step 4/6. Its function is as follows. Transaminase with broad substrate specificity. Has transaminase activity towards aminoadipate, kynurenine, methionine and glutamate. Shows activity also towards tryptophan, aspartate and hydroxykynurenine. Accepts a variety of oxo-acids as amino-group acceptors, with a preference for 2-oxoglutarate, 2-oxocaproic acid, phenylpyruvate and alpha-oxo-gamma-methiol butyric acid. Can also use glyoxylate as amino-group acceptor (in vitro). This Mus musculus (Mouse) protein is Kynurenine/alpha-aminoadipate aminotransferase, mitochondrial.